Reading from the N-terminus, the 240-residue chain is 2,3,4,5-tetrahydropyridine-2,6-dicarboxylate N-acetyltransferase (240 aa).

It belongs to the transferase hexapeptide repeat family. DapH subfamily.

The catalysed reaction is (S)-2,3,4,5-tetrahydrodipicolinate + acetyl-CoA + H2O = L-2-acetamido-6-oxoheptanedioate + CoA. It functions in the pathway amino-acid biosynthesis; L-lysine biosynthesis via DAP pathway; LL-2,6-diaminopimelate from (S)-tetrahydrodipicolinate (acetylase route): step 1/3. Functionally, catalyzes the transfer of an acetyl group from acetyl-CoA to tetrahydrodipicolinate. In Bacillus cereus (strain G9842), this protein is 2,3,4,5-tetrahydropyridine-2,6-dicarboxylate N-acetyltransferase.